The primary structure comprises 194 residues: Ribosome maturation factor RimM (194 aa).

One can recognise a PRC barrel domain in the interval 92 to 190; that stretch reads DDGYYDHELI…ALVVTPPEGL (99 aa).

This sequence belongs to the RimM family. In terms of assembly, binds ribosomal protein uS19.

The protein resides in the cytoplasm. An accessory protein needed during the final step in the assembly of 30S ribosomal subunit, possibly for assembly of the head region. Essential for efficient processing of 16S rRNA. May be needed both before and after RbfA during the maturation of 16S rRNA. It has affinity for free ribosomal 30S subunits but not for 70S ribosomes. The polypeptide is Ribosome maturation factor RimM (Corynebacterium urealyticum (strain ATCC 43042 / DSM 7109)).